The sequence spans 942 residues: DNA mismatch repair protein MutS (942 aa).

613 to 620 (GPNMAGKS) is an ATP binding site.

The protein belongs to the DNA mismatch repair MutS family.

Functionally, this protein is involved in the repair of mismatches in DNA. It is possible that it carries out the mismatch recognition step. This protein has a weak ATPase activity. This Clostridium botulinum (strain Eklund 17B / Type B) protein is DNA mismatch repair protein MutS.